The primary structure comprises 487 residues: DNA ligase (487 aa).

Residue K159 is the N6-AMP-lysine intermediate of the active site. The ATP site is built by R164, R182, and E217. E217 lines the a divalent metal cation pocket. The segment at 229 to 237 is interaction with the sliding clamp; sequence EGLDFLFDA. E344 contacts a divalent metal cation. Residues R359 and K365 each coordinate ATP.

This sequence belongs to the ATP-dependent DNA ligase family. As to quaternary structure, interacts with the sliding clamp. The cofactor is a divalent metal cation.

The enzyme catalyses ATP + (deoxyribonucleotide)n-3'-hydroxyl + 5'-phospho-(deoxyribonucleotide)m = (deoxyribonucleotide)n+m + AMP + diphosphate.. DNA ligase, which is expressed in the early stage of lytic development, has been implicated in T4 DNA synthesis and genetic recombination. It may also play a role in T4 DNA repair. This is DNA ligase (30) from Enterobacteria phage T4 (Bacteriophage T4).